Here is a 274-residue protein sequence, read N- to C-terminus: Nitrogenase iron protein (274 aa).

8–15 (GKGGIGKS) lines the ATP pocket. Cys-94 is a [4Fe-4S] cluster binding site. At Arg-97 the chain carries ADP-ribosylarginine; by dinitrogenase reductase ADP-ribosyltransferase. Cys-131 provides a ligand contact to [4Fe-4S] cluster.

This sequence belongs to the NifH/BchL/ChlL family. Homodimer. It depends on [4Fe-4S] cluster as a cofactor. In terms of processing, the reversible ADP-ribosylation of Arg-97 inactivates the nitrogenase reductase and regulates nitrogenase activity.

The catalysed reaction is N2 + 8 reduced [2Fe-2S]-[ferredoxin] + 16 ATP + 16 H2O = H2 + 8 oxidized [2Fe-2S]-[ferredoxin] + 2 NH4(+) + 16 ADP + 16 phosphate + 6 H(+). The key enzymatic reactions in nitrogen fixation are catalyzed by the nitrogenase complex, which has 2 components: the iron protein and the molybdenum-iron protein. In Prosthecochloris aestuarii (strain DSM 271 / SK 413), this protein is Nitrogenase iron protein.